A 282-amino-acid polypeptide reads, in one-letter code: Putative phosphoenolpyruvate synthase regulatory protein (282 aa).

An ADP-binding site is contributed by 162–169 (GVSRSGKT).

Belongs to the pyruvate, phosphate/water dikinase regulatory protein family. PSRP subfamily.

It carries out the reaction [pyruvate, water dikinase] + ADP = [pyruvate, water dikinase]-phosphate + AMP + H(+). It catalyses the reaction [pyruvate, water dikinase]-phosphate + phosphate + H(+) = [pyruvate, water dikinase] + diphosphate. Its function is as follows. Bifunctional serine/threonine kinase and phosphorylase involved in the regulation of the phosphoenolpyruvate synthase (PEPS) by catalyzing its phosphorylation/dephosphorylation. The polypeptide is Putative phosphoenolpyruvate synthase regulatory protein (Psychrobacter arcticus (strain DSM 17307 / VKM B-2377 / 273-4)).